Consider the following 689-residue polypeptide: DNA ligase (689 aa).

Residues 40–44 (DSEYD), 89–90 (SL), and E121 each bind NAD(+). The active-site N6-AMP-lysine intermediate is the K123. Positions 144, 179, 295, and 319 each coordinate NAD(+). Zn(2+)-binding residues include C413, C416, C431, and C437. Residues 610–689 (REQSSLTDKI…EEWLTLIKNV (80 aa)) enclose the BRCT domain.

This sequence belongs to the NAD-dependent DNA ligase family. LigA subfamily. The cofactor is Mg(2+). Mn(2+) is required as a cofactor.

It carries out the reaction NAD(+) + (deoxyribonucleotide)n-3'-hydroxyl + 5'-phospho-(deoxyribonucleotide)m = (deoxyribonucleotide)n+m + AMP + beta-nicotinamide D-nucleotide.. Its function is as follows. DNA ligase that catalyzes the formation of phosphodiester linkages between 5'-phosphoryl and 3'-hydroxyl groups in double-stranded DNA using NAD as a coenzyme and as the energy source for the reaction. It is essential for DNA replication and repair of damaged DNA. This is DNA ligase from Rickettsia massiliae (strain Mtu5).